A 448-amino-acid chain; its full sequence is Argininosuccinate synthase (448 aa).

ATP contacts are provided by residues 17–25 (AFSGGLDTS) and alanine 43. Residue tyrosine 99 coordinates L-citrulline. Glycine 129 and threonine 131 together coordinate ATP. Residues threonine 131, asparagine 135, and aspartate 136 each coordinate L-aspartate. Residue asparagine 135 coordinates L-citrulline. Position 136 (aspartate 136) interacts with ATP. The L-citrulline site is built by arginine 139 and serine 192. Aspartate 194 provides a ligand contact to ATP. L-citrulline-binding residues include threonine 201, glutamate 203, and glutamate 280.

The protein belongs to the argininosuccinate synthase family. Type 2 subfamily. In terms of assembly, homotetramer.

The protein localises to the cytoplasm. The enzyme catalyses L-citrulline + L-aspartate + ATP = 2-(N(omega)-L-arginino)succinate + AMP + diphosphate + H(+). Its pathway is amino-acid biosynthesis; L-arginine biosynthesis; L-arginine from L-ornithine and carbamoyl phosphate: step 2/3. In Acidovorax ebreus (strain TPSY) (Diaphorobacter sp. (strain TPSY)), this protein is Argininosuccinate synthase.